Consider the following 94-residue polypeptide: Co-chaperonin GroES (94 aa).

Positions 17-53 (DSNPNSPIQLPDSAKKKPTKGKVVSVGPGASNSDGKV) are disordered.

It belongs to the GroES chaperonin family. Heptamer of 7 subunits arranged in a ring. Interacts with the chaperonin GroEL.

The protein localises to the cytoplasm. In terms of biological role, together with the chaperonin GroEL, plays an essential role in assisting protein folding. The GroEL-GroES system forms a nano-cage that allows encapsulation of the non-native substrate proteins and provides a physical environment optimized to promote and accelerate protein folding. GroES binds to the apical surface of the GroEL ring, thereby capping the opening of the GroEL channel. In Anaplasma phagocytophilum (strain HZ), this protein is Co-chaperonin GroES.